A 274-amino-acid chain; its full sequence is Copper chaperone for superoxide dismutase (274 aa).

Positions 11 to 74 constitute an HMA domain; the sequence is MCALEFTVQM…LLESTGRQAV (64 aa). 2 residues coordinate Cu cation: cysteine 22 and cysteine 25. A Glycyl lysine isopeptide (Lys-Gly) (interchain with G-Cter in ubiquitin) cross-link involves residue lysine 76. The superoxide dismutase-like stretch occupies residues 88 to 234; sequence AAVAIMEGSG…LACGIIARSA (147 aa). A disulfide bridge connects residues cysteine 141 and cysteine 227. Zn(2+) is bound by residues histidine 147, histidine 155, histidine 164, and aspartate 167. Residues lysine 189, lysine 216, and lysine 241 each participate in a glycyl lysine isopeptide (Lys-Gly) (interchain with G-Cter in ubiquitin) cross-link. Residues cysteine 244 and cysteine 246 each contribute to the Cu cation site. The residue at position 267 (serine 267) is a Phosphoserine.

This sequence in the C-terminal section; belongs to the Cu-Zn superoxide dismutase family. As to quaternary structure, homodimer, and heterodimer with SOD1. Interacts with COMMD1. Interacts with XIAP/BIRC4. Interacts with SLC31A1(via C-terminal domain); this interaction is Cu(1+)-mediated. The heterodimer CCS:SOD1 interacts with SLC31A1; this heterotrimer is Cu(1+)-mediated and its maintenance is regulated through SOD1 activation. It depends on Cu(2+) as a cofactor. Zn(2+) is required as a cofactor. Post-translationally, ubiquitinion by XIAP/BIRC4 leads to enhancement of its chaperone activity toward its physiologic target, SOD1, rather than proteasomal degradation. XIAP/BIRC4 preferentially ubiquitinates at Lys-241.

The protein localises to the cytoplasm. In terms of biological role, delivers copper to copper zinc superoxide dismutase (SOD1). The polypeptide is Copper chaperone for superoxide dismutase (Rattus norvegicus (Rat)).